The following is a 448-amino-acid chain: Protein EVI2B (448 aa).

A signal peptide spans 1–21 (MDPKYFILILFCGHLNNTFFS). N-linked (GlcNAc...) asparagine glycosylation is found at Asn16 and Asn50. Over 22 to 202 (KTETITTEKQ…QTPQKNNYNS (181 aa)) the chain is Extracellular. A disordered region spans residues 74 to 108 (AKVTAGQPTPAVYTSSEKPEAHTSAGQPLAYNTKQ). Polar residues predominate over residues 97–108 (SAGQPLAYNTKQ). A glycan (N-linked (GlcNAc...) asparagine) is linked at Asn114. Residues 203-226 (IAAILIGVLLTSMLVAIIIIVLWK) traverse the membrane as a helical segment. At 227 to 448 (CLRKPVLNDQ…SLPPPPAELL (222 aa)) the chain is on the cytoplasmic side. Position 249 is a phosphothreonine (Thr249). Ser268, Ser271, Ser278, and Ser294 each carry phosphoserine. Disordered stretches follow at residues 298 to 372 (IEDS…DSTS) and 427 to 448 (SIPPNSDQDLNESLPPPPAELL). 2 stretches are compositionally biased toward polar residues: residues 313 to 333 (VNGTSEDSADGSTVGTAVSSS) and 350 to 372 (QESNQSDKPTMTIVSPLPNDSTS).

As to expression, bone marrow, peripheral blood mononuclear cells, fibroblasts and Epstein-Barr virus-transformed lymphoblastoid cell lines. Strongly expressed in granulocytic cells, and weakly on lymphocytes cells.

The protein resides in the membrane. Functionally, required for granulocyte differentiation and functionality of hematopoietic progenitor cells through the control of cell cycle progression and survival of hematopoietic progenitor cells. This Homo sapiens (Human) protein is Protein EVI2B.